A 346-amino-acid polypeptide reads, in one-letter code: Arsenite methyltransferase (346 aa).

The protein belongs to the methyltransferase superfamily. Arsenite methyltransferase family.

It carries out the reaction arsenic triglutathione + [thioredoxin]-dithiol + S-adenosyl-L-methionine + 2 H2O = methylarsonous acid + [thioredoxin]-disulfide + 3 glutathione + S-adenosyl-L-homocysteine + H(+). The enzyme catalyses arsenic triglutathione + 2 [thioredoxin]-dithiol + 2 S-adenosyl-L-methionine + H2O = dimethylarsinous acid + 2 [thioredoxin]-disulfide + 3 glutathione + 2 S-adenosyl-L-homocysteine + 2 H(+). The catalysed reaction is arsenic triglutathione + 3 [thioredoxin]-dithiol + 3 S-adenosyl-L-methionine = trimethylarsine + 3 [thioredoxin]-disulfide + 3 glutathione + 3 S-adenosyl-L-homocysteine + 3 H(+). Its function is as follows. Catalyzes the transfer of a methyl group from AdoMet to arsenite, producing methylated arsenicals. Involved in the conversion of As(III) to dimethylarsenate as the main product in the medium and also produces dimethylarsine and trimethylarsine gases. Reduces the arsenic toxicity in the cell and may contribute to the global arsenic cycling. This chain is Arsenite methyltransferase, found in Aquipseudomonas alcaligenes (strain ATCC 14909 / DSM 50342 / CCUG 1425 / JCM 20561 / NBRC 14159 / NCIMB 9945 / NCTC 10367 / 1577) (Pseudomonas alcaligenes).